Here is a 287-residue protein sequence, read N- to C-terminus: MSPHPTALLGLVLCLAQTIHTQEEDLPRPSISAEPGTVIPLGSHVTFVCRGPVGVQTFRLERDSRSTYNDTEDVSQASPSESEARFRIDSVREGNAGLYRCIYYKPPKWSEQSDYLELLVKESSGGPDSPDTEPGSSAGPTQRPSDNSHNEHAPASQGLKAEHLYILIGVSVVFLFCLLLLVLFCLHRQNQIKQGPPRSKDEEQKPQQRPDLAVDVLERTADKATVNGLPEKDRETDTSALAAGSSQEVTYAQLDHWALTQRTARAVSPQSTKPMAESITYAAVARH.

A signal peptide spans 1 to 21 (MSPHPTALLGLVLCLAQTIHT). Residues 22 to 165 (QEEDLPRPSI…SQGLKAEHLY (144 aa)) are Extracellular-facing. The Ig-like C2-type domain occupies 29-117 (PSISAEPGTV…KWSEQSDYLE (89 aa)). A disulfide bridge connects residues C49 and C101. N69 carries an N-linked (GlcNAc...) asparagine glycan. Residues 121-155 (KESSGGPDSPDTEPGSSAGPTQRPSDNSHNEHAPA) form a disordered region. The span at 134 to 145 (PGSSAGPTQRPS) shows a compositional bias: polar residues. The helical transmembrane segment at 166 to 186 (ILIGVSVVFLFCLLLLVLFCL) threads the bilayer. The Cytoplasmic segment spans residues 187-287 (HRQNQIKQGP…SITYAAVARH (101 aa)). The interval 192–211 (IKQGPPRSKDEEQKPQQRPD) is disordered. Positions 198–208 (RSKDEEQKPQQ) are enriched in basic and acidic residues. 2 consecutive short sequence motifs (ITIM motif) follow at residues 249–254 (VTYAQL) and 279–284 (ITYAAV). A phosphotyrosine mark is found at Y251 and Y281.

As to quaternary structure, interacts with SH2 domains of tyrosine-protein phosphatases PTPN6 and PTPN11. The interaction with PTPN6 is constitutive. Interacts with the SH2 domain of CSK. Binds with high affinity to extracellular matrix collagens, the interaction is functionally important. Phosphorylation at Tyr-251 and Tyr-281 activates it. May be phosphorylated by LCK. In terms of processing, N-glycosylated. In terms of tissue distribution, expressed on the majority of peripheral mononuclear cells, including natural killer (NK) cells, T-cells, B-cells, monocytes, and dendritic cells. Highly expressed in naive T-cells and B-cells but no expression on germinal center B-cells. Abnormally low expression in naive B-cells from HIV-1 infected patients. Very low expression in NK cells from a patient with chronic active Epstein-Barr virus infection.

It localises to the cell membrane. Functions as an inhibitory receptor that plays a constitutive negative regulatory role on cytolytic function of natural killer (NK) cells, B-cells and T-cells. Activation by Tyr phosphorylation results in recruitment and activation of the phosphatases PTPN6 and PTPN11. It also reduces the increase of intracellular calcium evoked by B-cell receptor ligation. May also play its inhibitory role independently of SH2-containing phosphatases. Modulates cytokine production in CD4+ T-cells, down-regulating IL2 and IFNG production while inducing secretion of transforming growth factor beta. Also down-regulates IgG and IgE production in B-cells as well as IL8, IL10 and TNF secretion. Inhibits proliferation and induces apoptosis in myeloid leukemia cell lines as well as prevents nuclear translocation of NF-kappa-B p65 subunit/RELA and phosphorylation of I-kappa-B alpha/CHUK in these cells. Inhibits the differentiation of peripheral blood precursors towards dendritic cells. This Homo sapiens (Human) protein is Leukocyte-associated immunoglobulin-like receptor 1 (LAIR1).